The chain runs to 170 residues: RNA pyrophosphohydrolase (170 aa).

Residues 6–149 (GFRPNVGIVI…KRDVYRRALK (144 aa)) enclose the Nudix hydrolase domain. The Nudix box motif lies at 38 to 59 (GGIDDGETPEQAMYRELYEEVG).

The protein belongs to the Nudix hydrolase family. RppH subfamily. A divalent metal cation is required as a cofactor.

In terms of biological role, accelerates the degradation of transcripts by removing pyrophosphate from the 5'-end of triphosphorylated RNA, leading to a more labile monophosphorylated state that can stimulate subsequent ribonuclease cleavage. The chain is RNA pyrophosphohydrolase from Aliivibrio salmonicida (strain LFI1238) (Vibrio salmonicida (strain LFI1238)).